A 208-amino-acid polypeptide reads, in one-letter code: Uracil phosphoribosyltransferase (208 aa).

Residues Arg78, Arg103, and 130 to 138 (DPMLATANS) contribute to the 5-phospho-alpha-D-ribose 1-diphosphate site. Uracil contacts are provided by residues Ile193 and 198–200 (GDA). Asp199 serves as a coordination point for 5-phospho-alpha-D-ribose 1-diphosphate.

Belongs to the UPRTase family. Requires Mg(2+) as cofactor.

The catalysed reaction is UMP + diphosphate = 5-phospho-alpha-D-ribose 1-diphosphate + uracil. The protein operates within pyrimidine metabolism; UMP biosynthesis via salvage pathway; UMP from uracil: step 1/1. Its activity is regulated as follows. Allosterically activated by GTP. Catalyzes the conversion of uracil and 5-phospho-alpha-D-ribose 1-diphosphate (PRPP) to UMP and diphosphate. The sequence is that of Uracil phosphoribosyltransferase from Brucella canis (strain ATCC 23365 / NCTC 10854 / RM-666).